The chain runs to 132 residues: Small ribosomal subunit protein uS8c (132 aa).

The protein belongs to the universal ribosomal protein uS8 family. As to quaternary structure, part of the 30S ribosomal subunit.

It localises to the plastid. The protein resides in the chloroplast. Functionally, one of the primary rRNA binding proteins, it binds directly to 16S rRNA central domain where it helps coordinate assembly of the platform of the 30S subunit. In Staurastrum punctulatum (Green alga), this protein is Small ribosomal subunit protein uS8c (rps8).